The chain runs to 397 residues: Acetate kinase 2 (397 aa).

Asn10 contributes to the Mg(2+) binding site. ATP is bound at residue Lys17. Arg90 lines the substrate pocket. The active-site Proton donor/acceptor is the Asp147. Residues 207–211, 281–283, and 329–333 each bind ATP; these read HLGNG, DAR, and GIGEN. Glu385 serves as a coordination point for Mg(2+).

The protein belongs to the acetokinase family. In terms of assembly, homodimer. It depends on Mg(2+) as a cofactor. Requires Mn(2+) as cofactor.

The protein localises to the cytoplasm. It carries out the reaction acetate + ATP = acetyl phosphate + ADP. It participates in metabolic intermediate biosynthesis; acetyl-CoA biosynthesis; acetyl-CoA from acetate: step 1/2. Catalyzes the formation of acetyl phosphate from acetate and ATP. Can also catalyze the reverse reaction. In Aliivibrio fischeri (strain ATCC 700601 / ES114) (Vibrio fischeri), this protein is Acetate kinase 2.